The primary structure comprises 266 residues: Putative tyrosine phosphatase 197R (266 aa).

Residues 15–167 (RPTLGSLSDK…LFGSQNINND (153 aa)) enclose the Tyrosine-protein phosphatase domain. The active-site Phosphocysteine intermediate is cysteine 111.

Belongs to the protein-tyrosine phosphatase family.

It carries out the reaction O-phospho-L-tyrosyl-[protein] + H2O = L-tyrosyl-[protein] + phosphate. The sequence is that of Putative tyrosine phosphatase 197R from Invertebrate iridescent virus 6 (IIV-6).